A 353-amino-acid chain; its full sequence is Deoxyhypusine synthase (353 aa).

Residues 90 to 94 (SNLIS), 116 to 118 (TAG), Glu122, and Asp228 each bind NAD(+). Spermidine is bound at residue 121–122 (EE). Asp233 lines the spermidine pocket. Gly275 is a binding site for NAD(+). A spermidine-binding site is contributed by His280. 300–301 (TA) provides a ligand contact to NAD(+). Residues 306-308 (GSD) and 315-321 (EAVSWGK) contribute to the spermidine site. The active-site Nucleophile is Lys321. 334–335 (EA) provides a ligand contact to NAD(+).

Belongs to the deoxyhypusine synthase family. Homotetramer. Requires NAD(+) as cofactor.

It carries out the reaction [eIF5A protein]-L-lysine + spermidine = [eIF5A protein]-deoxyhypusine + propane-1,3-diamine. It participates in protein modification; eIF5A hypusination. Its function is as follows. Catalyzes the NAD-dependent oxidative cleavage of spermidine and the subsequent transfer of the butylamine moiety of spermidine to the epsilon-amino group of a specific lysine residue of the eIF-5A precursor protein to form the intermediate deoxyhypusine residue. This chain is Deoxyhypusine synthase (dys-1), found in Neurospora crassa (strain ATCC 24698 / 74-OR23-1A / CBS 708.71 / DSM 1257 / FGSC 987).